Consider the following 701-residue polypeptide: Octapeptide-repeat antigen (701 aa).

Asn-40, Asn-41, Asn-76, Asn-111, Asn-127, Asn-139, Asn-181, Asn-189, Asn-311, Asn-334, Asn-344, Asn-477, and Asn-557 each carry an N-linked (GlcNAc...) asparagine glycan. The disordered stretch occupies residues 120–140 (IENEEKSNGSRKSSNKQKYNE). Positions 641 to 701 (LSGSSTGSMN…IKSGSKDHIK (61 aa)) are disordered. Positions 642-655 (SGSSTGSMNNGKSG) are enriched in low complexity. Repeat copies occupy residues 653–660 (KSGSKSDI), 661–668 (KGGSKDDI), 669–676 (KSGSKDDI), 677–684 (KSGSKADI), 685–692 (KSGSKDDI), and 693–700 (KSGSKDHI). The tract at residues 653–700 (KSGSKSDIKGGSKDDIKSGSKDDIKSGSKADIKSGSKDDIKSGSKDHI) is 6 X 8 AA approximate tandem repeats. Residues 656-701 (SKSDIKGGSKDDIKSGSKDDIKSGSKADIKSGSKDDIKSGSKDHIK) are compositionally biased toward basic and acidic residues.

Belongs to the ATP-dependent AMP-binding enzyme family.

The protein resides in the parasitophorous vacuole. The polypeptide is Octapeptide-repeat antigen (Plasmodium falciparum (isolate NF7 / Ghana)).